The primary structure comprises 1474 residues: Alpha-2-macroglobulin (1474 aa).

The N-terminal stretch at 1–23 (MGKNKLLHPSLVLLLLVLLPTDA) is a signal peptide. A disulfide bridge connects residues Cys48 and Cys86. The N-linked (GlcNAc...) (complex) asparagine glycan is linked to Asn55. N-linked (GlcNAc...) asparagine glycans are attached at residues Asn70 and Asn247. 2 disulfides stabilise this stretch: Cys251–Cys299 and Cys269–Cys287. Asn396 and Asn410 each carry an N-linked (GlcNAc...) asparagine glycan. Disulfide bonds link Cys470/Cys563, Cys595/Cys771, Cys642/Cys689, Cys821/Cys849, Cys847/Cys883, Cys921/Cys1321, Cys1079/Cys1127, and Cys1352/Cys1467. The tract at residues 690–728 (PQLQQYEMHGPEGLRVGFYESDVMGRGHARLVHVEEPHT) is bait region. Residues Gln693 and Gln694 each participate in an isoglutamyl lysine isopeptide (Gln-Lys) (interchain with K-? in other proteins) cross-link. 3 inhibitory regions span residues 704-709 (RVGFYE), 719-723 (RLVHV), and 730-735 (TVRKYF). Asn869 carries an N-linked (GlcNAc...) asparagine glycan. The segment at residues 972-975 (CGEQ) is a cross-link (isoglutamyl cysteine thioester (Cys-Gln)). A glycan (N-linked (GlcNAc...) asparagine) is linked at Asn991. The N-linked (GlcNAc...) (complex) asparagine glycan is linked to Asn1424.

The protein belongs to the protease inhibitor I39 (alpha-2-macroglobulin) family. Homotetramer; disulfide-linked. Secreted in plasma.

Its subcellular location is the secreted. Functionally, is able to inhibit all four classes of proteinases by a unique 'trapping' mechanism. This protein has a peptide stretch, called the 'bait region' which contains specific cleavage sites for different proteinases. When a proteinase cleaves the bait region, a conformational change is induced in the protein which traps the proteinase. The entrapped enzyme remains active against low molecular weight substrates (activity against high molecular weight substrates is greatly reduced). Following cleavage in the bait region, a thioester bond is hydrolyzed and mediates the covalent binding of the protein to the proteinase. The chain is Alpha-2-macroglobulin (A2M) from Homo sapiens (Human).